The primary structure comprises 283 residues: Bifunctional protein FolD (283 aa).

NADP(+) is bound by residues 164-166 (GRS), S189, and I230.

It belongs to the tetrahydrofolate dehydrogenase/cyclohydrolase family. Homodimer.

The enzyme catalyses (6R)-5,10-methylene-5,6,7,8-tetrahydrofolate + NADP(+) = (6R)-5,10-methenyltetrahydrofolate + NADPH. It catalyses the reaction (6R)-5,10-methenyltetrahydrofolate + H2O = (6R)-10-formyltetrahydrofolate + H(+). Its pathway is one-carbon metabolism; tetrahydrofolate interconversion. Its function is as follows. Catalyzes the oxidation of 5,10-methylenetetrahydrofolate to 5,10-methenyltetrahydrofolate and then the hydrolysis of 5,10-methenyltetrahydrofolate to 10-formyltetrahydrofolate. The polypeptide is Bifunctional protein FolD (Lactobacillus delbrueckii subsp. bulgaricus (strain ATCC BAA-365 / Lb-18)).